The chain runs to 125 residues: Putative glutaredoxin-C2 (125 aa).

In terms of domain architecture, Glutaredoxin spans 2–103 (AERVARLSSQ…PLLREAGALW (102 aa)). A disulfide bridge connects residues cysteine 22 and cysteine 25.

The protein belongs to the glutaredoxin family. CC-type subfamily.

It localises to the cytoplasm. Its function is as follows. Has a glutathione-disulfide oxidoreductase activity in the presence of NADPH and glutathione reductase. Reduces low molecular weight disulfides and proteins. This is Putative glutaredoxin-C2 (GRXC2) from Oryza sativa subsp. japonica (Rice).